We begin with the raw amino-acid sequence, 120 residues long: MSERSARQWPDFLSVVLLALLLWISLFCGWRALMFCCASVFSVALCVAADCLDALIMSCRVPEHFARFVWPLTWLGSLSGLGLAVMATSQLKTGPEHVIWALAGLLTFWLSFRFRARLFG.

Transmembrane regions (helical) follow at residues 9-29 (WPDF…LFCG), 32-52 (ALMF…ADCL), 68-88 (FVWP…VMAT), and 94-114 (GPEH…SFRF).

It is found in the membrane. This is an uncharacterized protein from Escherichia phage Mu (Bacteriophage Mu).